The chain runs to 279 residues: uncharacterized protein (279 aa).

Positions 1–19 are cleaved as a signal peptide; sequence MKLKLYLIPLLASGIILSA. Cysteine 20 is lipidated: N-palmitoyl cysteine. A lipid anchor (S-diacylglycerol cysteine) is attached at cysteine 20.

This sequence belongs to the MG439/MG440 family.

Its subcellular location is the cell membrane. This is an uncharacterized protein from Mycoplasma pneumoniae (strain ATCC 29342 / M129 / Subtype 1) (Mycoplasmoides pneumoniae).